A 741-amino-acid chain; its full sequence is Nuclear pore complex protein Nup88 (741 aa).

An N-acetylalanine modification is found at Ala2. 6 positions are modified to phosphoserine: Ser35, Ser50, Ser379, Ser437, Ser442, and Ser517. Thr525 is subject to Phosphothreonine. Ser540 is subject to Phosphoserine. Residues 585–651 (EEIQRRVKLL…KLLHSFHSEL (67 aa)) adopt a coiled-coil conformation. Ser698 is modified (phosphoserine).

In terms of assembly, interacts with NUP214/CAN. Interacts with NUP62 and NUP98. Ubiquitous.

It localises to the nucleus. The protein localises to the nuclear pore complex. Functionally, component of nuclear pore complex. This is Nuclear pore complex protein Nup88 (NUP88) from Homo sapiens (Human).